We begin with the raw amino-acid sequence, 335 residues long: Cut9-interacting protein scn1 (335 aa).

Belongs to the metallo-dependent hydrolases superfamily.

Its function is as follows. Interacts with cut9. The sequence is that of Cut9-interacting protein scn1 (scn1) from Schizosaccharomyces pombe (strain 972 / ATCC 24843) (Fission yeast).